A 916-amino-acid polypeptide reads, in one-letter code: Cadherin-4 (916 aa).

The signal sequence occupies residues 1 to 20 (MTAGAGVLLLLLSLSGALRA). Residues 21-169 (HNEDLTTRET…NANGLRRRKR (149 aa)) constitute a propeptide that is removed on maturation. Residues 124-168 (TSSPHSGHKPQKGKKVVALDPSPPPKDTLLPWPQHQNANGLRRRK) are disordered. Residues 129 to 138 (SGHKPQKGKK) show a composition bias toward basic residues. Cadherin domains are found at residues 170–277 (DWVI…RPEF), 278–392 (INQV…PPEF), 393–507 (TAST…APYF), 508–613 (PSNH…DNAP), and 614–724 (ELLP…TIGA). Residues 170 to 734 (DWVIPPINVP…VAAAGLGTGA (565 aa)) lie on the Extracellular side of the membrane. N-linked (GlcNAc...) asparagine glycosylation is found at Asn-283, Asn-412, Asn-557, Asn-632, Asn-661, and Asn-702. Residues 735-756 (IVAILICILILLTMVLLFVMWM) form a helical membrane-spanning segment. Over 757-916 (KRREKERHTK…ADMYGGGEED (160 aa)) the chain is Cytoplasmic. A disordered region spans residues 806 to 838 (MGHVPSKAPGVRRVDERPVGAEPQYPIRPMVPH).

Expressed mainly in brain but also found in other tissues.

It localises to the cell membrane. Its function is as follows. Cadherins are calcium-dependent cell adhesion proteins. They preferentially interact with themselves in a homophilic manner in connecting cells; cadherins may thus contribute to the sorting of heterogeneous cell types. May play an important role in retinal development. In Homo sapiens (Human), this protein is Cadherin-4 (CDH4).